The primary structure comprises 798 residues: Protocadherin beta-13 (798 aa).

The N-terminal stretch at 1-28 is a signal peptide; that stretch reads MEASGKLICRQRQVLFSFLLLGLSLAGA. The Extracellular portion of the chain corresponds to 29 to 690; sequence AEPRSYSVVE…AQADSLTVYL (662 aa). 5 Cadherin domains span residues 36-134, 139-243, 248-348, 353-451, and 456-561; these read VVEE…SPVF, MLVK…APEF, YRVQ…APEV, FTSP…APAF, and YTLF…SPFV. N418 and N436 each carry an N-linked (GlcNAc...) asparagine glycan. The N-linked (GlcNAc...) asparagine glycan is linked to N567. The 104-residue stretch at 568–671 folds into the Cadherin 6 domain; sequence GSAPCTELVP…LVDGFSQPYL (104 aa). Residues 691-711 traverse the membrane as a helical segment; sequence VVALASVSSLFLFSVLLFVAV. Over 712 to 798 the chain is Cytoplasmic; sequence RLCRRSRAAS…FPNNFGFNIQ (87 aa).

The protein localises to the cell membrane. Its function is as follows. Potential calcium-dependent cell-adhesion protein. May be involved in the establishment and maintenance of specific neuronal connections in the brain. This Pan troglodytes (Chimpanzee) protein is Protocadherin beta-13 (PCDHB13).